The following is a 301-amino-acid chain: D-alanine--D-alanine ligase (301 aa).

The region spanning Lys-99 to Asp-294 is the ATP-grasp domain. Ile-126–Thr-181 contacts ATP. The Mg(2+) site is built by Asp-248, Glu-261, and Asn-263.

The protein belongs to the D-alanine--D-alanine ligase family. Mg(2+) is required as a cofactor. The cofactor is Mn(2+).

It localises to the cytoplasm. It catalyses the reaction 2 D-alanine + ATP = D-alanyl-D-alanine + ADP + phosphate + H(+). The protein operates within cell wall biogenesis; peptidoglycan biosynthesis. In terms of biological role, cell wall formation. The polypeptide is D-alanine--D-alanine ligase (Clostridium botulinum (strain Alaska E43 / Type E3)).